Consider the following 286-residue polypeptide: Bifunctional protein FolD (286 aa).

166 to 168 (GAS) contributes to the NADP(+) binding site.

Belongs to the tetrahydrofolate dehydrogenase/cyclohydrolase family. As to quaternary structure, homodimer.

It carries out the reaction (6R)-5,10-methylene-5,6,7,8-tetrahydrofolate + NADP(+) = (6R)-5,10-methenyltetrahydrofolate + NADPH. The catalysed reaction is (6R)-5,10-methenyltetrahydrofolate + H2O = (6R)-10-formyltetrahydrofolate + H(+). It functions in the pathway one-carbon metabolism; tetrahydrofolate interconversion. Its function is as follows. Catalyzes the oxidation of 5,10-methylenetetrahydrofolate to 5,10-methenyltetrahydrofolate and then the hydrolysis of 5,10-methenyltetrahydrofolate to 10-formyltetrahydrofolate. The sequence is that of Bifunctional protein FolD from Idiomarina loihiensis (strain ATCC BAA-735 / DSM 15497 / L2-TR).